We begin with the raw amino-acid sequence, 2198 residues long: Activating signal cointegrator 1 complex subunit 3 (2198 aa).

Ser-12 carries the post-translational modification Phosphoserine. 2 coiled-coil regions span residues 18–81 (KQDN…KQIV) and 328–356 (IQSE…KAGE). The Helicase ATP-binding 1 domain maps to 487-670 (ETAYNTNENM…FLHVNPYIGL (184 aa)). 500–507 (APTGAGKT) contacts ATP. The residue at position 573 (Lys-573) is an N6-acetyllysine. Residues 612–615 (DEVH) carry the DEVH box motif. The region spanning 697 to 915 (QLNNMDEVCY…GTVTNVEEAV (219 aa)) is the Helicase C-terminal 1 domain. The region spanning 979–1288 (STDLGRTASH…GAEAVCIINF (310 aa)) is the SEC63 1 domain. The region spanning 1337–1512 (HTLYHTDCNV…WLNIKQMGLF (176 aa)) is the Helicase ATP-binding 2 domain. 1350-1357 (APTGSGKT) contacts ATP. Residues 1454–1457 (DEIH) carry the DEIH box motif. In terms of domain architecture, Helicase C-terminal 2 spans 1545–1740 (PAFQAIRSHS…VLSDHLNAEI (196 aa)). The SEC63 2 domain occupies 1813–2177 (PLTCGRIASY…LGLDQQYDIY (365 aa)).

Belongs to the helicase family. In terms of assembly, identified in the ASCC complex that contains ASCC1, ASCC2 and ASCC3. Functions as a scaffolding subunit that interacts directly with both ASCC1 and ASCC2. Interacts directly with ALKBH3, and thereby recruits ALKBH3 to the ASCC complex. Part of the ASC-1/TRIP4 complex, that contains TRIP4, ASCC1, ASCC2 and ASCC3. Part of the RQT (ribosome quality control trigger) complex, that contains ASCC2, ASCC3 and TRIP4. Associates with ribosomes; recruited to collided ribosomes. Interacts with ZCCHC4. Interacts with ZNF598. Interacts with RPS3.

Its subcellular location is the nucleus. The protein resides in the nucleus speckle. It localises to the cytoplasm. The protein localises to the cytosol. The catalysed reaction is Couples ATP hydrolysis with the unwinding of duplex DNA by translocating in the 3'-5' direction.. It catalyses the reaction ATP + H2O = ADP + phosphate + H(+). ATPase involved both in DNA repair and rescue of stalled ribosomes. 3'-5' DNA helicase involved in repair of alkylated DNA: promotes DNA unwinding to generate single-stranded substrate needed for ALKBH3, enabling ALKBH3 to process alkylated N3-methylcytosine (3mC) within double-stranded regions. Also involved in activation of the ribosome quality control (RQC) pathway, a pathway that degrades nascent peptide chains during problematic translation. Drives the splitting of stalled ribosomes that are ubiquitinated in a ZNF598-dependent manner, as part of the ribosome quality control trigger (RQT) complex. Part of the ASC-1 complex that enhances NF-kappa-B, SRF and AP1 transactivation. The polypeptide is Activating signal cointegrator 1 complex subunit 3 (Ascc3) (Mus musculus (Mouse)).